The following is a 231-amino-acid chain: Succinate dehydrogenase subunit 5, mitochondrial (231 aa).

The transit peptide at 1–63 directs the protein to the mitochondrion; the sequence is MAAALRSSCA…AFSWNLRRLF (63 aa).

In terms of assembly, component of complex II composed of eight subunits in plants: four classical SDH subunits SDH1, SDH2, SDH3 and SDH4 (a flavoprotein (FP), an iron-sulfur protein (IP), and a cytochrome b composed of a large and a small subunit.), as well as four subunits unknown in mitochondria from bacteria and heterotrophic eukaryotes.

The protein localises to the mitochondrion inner membrane. Its pathway is carbohydrate metabolism; tricarboxylic acid cycle. The chain is Succinate dehydrogenase subunit 5, mitochondrial from Oryza sativa subsp. japonica (Rice).